Consider the following 867-residue polypeptide: GRB2-associated and regulator of MAPK protein 1 (867 aa).

The interval 12-322 (NNITWSTTTL…GLLQGESWFE (311 aa)) is CABIT. Tyrosine 464 carries the post-translational modification Phosphotyrosine. Disordered stretches follow at residues 511 to 530 (SADVNLPPPPVPPKSEAVKE), 536 to 594 (DAPP…QIES), and 735 to 758 (PPRTPKCTDAKKDAEAATTDTADA). 2 stretches are compositionally biased toward polar residues: residues 544–554 (SSKQAGSSSAT) and 569–581 (SPSPTLSYYSSGL). Basic and acidic residues predominate over residues 740-749 (KCTDAKKDAE). An SAM domain is found at 802 to 867 (ISIEEISKSL…QFINGWRPKM (66 aa)).

It belongs to the GAREM family.

Functionally, adapter protein that may provide a link between cell surface epidermal growth factor receptor and the MAPK/ERK signaling pathway. May promote cell proliferation. This Danio rerio (Zebrafish) protein is GRB2-associated and regulator of MAPK protein 1 (garem1).